Here is a 486-residue protein sequence, read N- to C-terminus: Cobyric acid synthase (486 aa).

Positions 251–439 constitute a GATase cobBQ-type domain; that stretch reads RAKIVVPMLS…VHGLFERGEA (189 aa). The active-site Nucleophile is Cys333. His431 is a catalytic residue.

Belongs to the CobB/CobQ family. CobQ subfamily.

It functions in the pathway cofactor biosynthesis; adenosylcobalamin biosynthesis. In terms of biological role, catalyzes amidations at positions B, D, E, and G on adenosylcobyrinic A,C-diamide. NH(2) groups are provided by glutamine, and one molecule of ATP is hydrogenolyzed for each amidation. The sequence is that of Cobyric acid synthase from Caulobacter sp. (strain K31).